The chain runs to 65 residues: Large ribosomal subunit protein bL35 (65 aa).

This sequence belongs to the bacterial ribosomal protein bL35 family.

In Prochlorococcus marinus (strain MIT 9215), this protein is Large ribosomal subunit protein bL35.